Here is a 210-residue protein sequence, read N- to C-terminus: uncharacterized protein (210 aa).

Disordered regions lie at residues 1-21 (MHRLFGRKPPTQPTASLTDAI) and 168-210 (EALQ…STAQ). A coiled-coil region spans residues 21–175 (IDSLDKRSDS…ELEALQQESS (155 aa)). The segment covering 174 to 184 (SSWLGDQSTAE) has biased composition (polar residues).

The protein belongs to the SNF7 family.

This is an uncharacterized protein from Schizosaccharomyces pombe (strain 972 / ATCC 24843) (Fission yeast).